The primary structure comprises 617 residues: ATP-dependent RNA helicase DBP1 (617 aa).

Positions 1–90 are disordered; it reads MADLPQKVSN…TSANYNRGGS (90 aa). The segment covering 7–17 has biased composition (polar residues); the sequence is KVSNLSINNKE. The span at 38–58 shows a compositional bias: basic and acidic residues; sequence PSFERSTPKQEDKVTGGDFFR. Positions 79–90 are enriched in polar residues; that stretch reads GGTSANYNRGGS. The Q motif motif lies at 154-182; the sequence is LDFSSPPLDELLMENIKLASFTKPTPVQK. One can recognise a Helicase ATP-binding domain in the interval 185–374; that stretch reads IPIVTKGRDL…RDFLDNYIFL (190 aa). Position 198 to 205 (198 to 205) interacts with ATP; it reads AQTGSGKT. The DEAD box motif lies at 318-321; it reads DEAD. Residues 385–545 form the Helicase C-terminal domain; it reads NITQRILYVD…EVPTFLSDLS (161 aa). Residues 542–617 form a disordered region; it reads SDLSRQNSRG…GYGNSNASWW (76 aa). A compositionally biased stretch (polar residues) spans 580 to 594; sequence FGSTRPRNTGTSNWG.

The protein belongs to the DEAD box helicase family. DDX3/DED1 subfamily.

The protein localises to the cytoplasm. It catalyses the reaction ATP + H2O = ADP + phosphate + H(+). In terms of biological role, ATP-binding RNA helicase involved in translation initiation. Remodels RNA in response to ADP and ATP concentrations by facilitating disruption, but also formation of RNA duplexes. Redundant to DED1, may be required in conditions in which DED1 expression is decreased. The sequence is that of ATP-dependent RNA helicase DBP1 (DBP1) from Saccharomyces cerevisiae (strain YJM789) (Baker's yeast).